A 398-amino-acid polypeptide reads, in one-letter code: 1-deoxy-D-xylulose 5-phosphate reductoisomerase (398 aa).

7 residues coordinate NADPH: T11, G12, S13, I14, R38, N39, and N125. K126 contacts 1-deoxy-D-xylulose 5-phosphate. E127 provides a ligand contact to NADPH. Position 151 (D151) interacts with Mn(2+). The 1-deoxy-D-xylulose 5-phosphate site is built by S152, E153, S179, and H202. E153 contacts Mn(2+). Residue G208 participates in NADPH binding. 4 residues coordinate 1-deoxy-D-xylulose 5-phosphate: S215, N220, K221, and E224. E224 is a binding site for Mn(2+).

Belongs to the DXR family. Requires Mg(2+) as cofactor. Mn(2+) serves as cofactor.

The catalysed reaction is 2-C-methyl-D-erythritol 4-phosphate + NADP(+) = 1-deoxy-D-xylulose 5-phosphate + NADPH + H(+). It functions in the pathway isoprenoid biosynthesis; isopentenyl diphosphate biosynthesis via DXP pathway; isopentenyl diphosphate from 1-deoxy-D-xylulose 5-phosphate: step 1/6. Its function is as follows. Catalyzes the NADPH-dependent rearrangement and reduction of 1-deoxy-D-xylulose-5-phosphate (DXP) to 2-C-methyl-D-erythritol 4-phosphate (MEP). This chain is 1-deoxy-D-xylulose 5-phosphate reductoisomerase, found in Burkholderia multivorans (strain ATCC 17616 / 249).